The following is a 542-amino-acid chain: Esterase S (542 aa).

Positions 1–22 (MTQILLPIALLCLFAASTLSNP) are cleaved as a signal peptide. An intrachain disulfide couples cysteine 81 to cysteine 100. N-linked (GlcNAc...) asparagine glycosylation occurs at asparagine 110. Serine 204 functions as the Acyl-ester intermediate in the catalytic mechanism. Cysteines 256 and 268 form a disulfide. The N-linked (GlcNAc...) asparagine glycan is linked to asparagine 396. A disulfide bond links cysteine 507 and cysteine 528.

The protein belongs to the type-B carboxylesterase/lipase family. As to quaternary structure, monomer. In terms of tissue distribution, specifically expressed in the ejaculatory bulbs of male.

It is found in the secreted. The catalysed reaction is a carboxylic ester + H2O = an alcohol + a carboxylate + H(+). Its function is as follows. Transferred from the ejaculatory bulbs of males to the female genitals upon copulation, plays an important role in the reproductive biology. This is Esterase S (EstS) from Drosophila virilis (Fruit fly).